An 855-amino-acid polypeptide reads, in one-letter code: Replication factor C small subunit (855 aa).

Positions 185-308 (WLGYFLGGGY…IAYALAGFGI (124 aa)) constitute a DOD-type homing endonuclease domain.

This sequence belongs to the activator 1 small subunits family. RfcS subfamily. As to quaternary structure, heteromultimer composed of small subunits (RfcS) and large subunits (RfcL). In terms of processing, this protein undergoes a protein self splicing that involves a post-translational excision of the intervening region (intein) followed by peptide ligation.

Functionally, part of the RFC clamp loader complex which loads the PCNA sliding clamp onto DNA. This is Replication factor C small subunit (rfcS) from Pyrococcus horikoshii (strain ATCC 700860 / DSM 12428 / JCM 9974 / NBRC 100139 / OT-3).